The primary structure comprises 740 residues: Gramillins biosynthetic cluster protein FGSG_11657 (740 aa).

Disordered stretches follow at residues 353 to 391 (QADSPVPLSSVKEESGLGKLARSPAEPAPSRPLPGSSIP), 414 to 434 (SKLSDEAEADTSIKPDSDAAS), 514 to 535 (PKEQEEPKRHRTSNNSIVGSSD), and 656 to 686 (EHEGEGRADTNRHVSTQSNMPTEQSLLPQGD). The segment covering 656-667 (EHEGEGRADTNR) has biased composition (basic and acidic residues). Positions 668–682 (HVSTQSNMPTEQSLL) are enriched in polar residues.

Its pathway is mycotoxin biosynthesis. In terms of biological role, part of the gene cluster that mediates the biosynthesis of gramillins A and B, bicyclic lipopeptides that induce cell death in maize leaves but not in wheat leaves. The nonribosomal peptide synthetase GRA1 incorporates respectively a glutamic adic (Glu), a leucine (Leu), a serine (Ser), a hydroxyglutamine (HOGln), a 2-amino decanoic acid, and 2 cysteins (CysB and CysA). The biosynthesis of 2-amino decanoic acid incorporated in gramillins could be initiated by a fatty acid synthase composed of the alpha and beta subunits FGSG_00036 and FGSG_11656. The cytochrome P450 monooxygenase FGSG_15680 could hydroxylate the fatty acid chain. Subsequent oxidation to the ketone by the oxidoreductase FGSG_00048 and transamination by aminotransferase FGSG_00049 could form 2-amino-decanoic acid. On the other hand, FGSG_15680 could also be responsible for the HO-modified glutamine at the gamma-position. Whether hydroxylation occurs on the fully assembled product or on the Gln residue prior to assembly into the gramillins requires further proof. The thioredoxin FGSG_00043 could also be required for the disulfide-bond formation between CysA and CysB. The specific involvement of the remaining proteins from the cluster is more difficult to discern, but could have broader regulatory (FGSG_00040 and FGSG_11657) or enzymatic functions (FGSG_00044 and FGSG_00045). The final C-domain of GRA1 does not possess the expected sequence of a termination CT domain, often implicated in macrocyclization and release of a cyclopeptidein fungal NRPs; and the thioesterase FGSG_00047 may act in concert with the terminal C-domain of GRA1 to catalyze the formation of the macrocyclic anhydride and release of the products. This chain is Gramillins biosynthetic cluster protein FGSG_11657, found in Gibberella zeae (strain ATCC MYA-4620 / CBS 123657 / FGSC 9075 / NRRL 31084 / PH-1) (Wheat head blight fungus).